The primary structure comprises 364 residues: GDSL esterase/lipase At1g29660 (364 aa).

A signal peptide spans 1–26 (MESYLRKWCLVSVWVLLLGLGFKVKA). Catalysis depends on Ser39, which acts as the Nucleophile. Active-site charge relay system residues include Asp328 and His331.

The protein belongs to the 'GDSL' lipolytic enzyme family. As to expression, found in phloem exudates.

The protein resides in the secreted. Its subcellular location is the extracellular space. It localises to the apoplast. In terms of biological role, involved in EDS1-dependent systemic acquired resistance, maybe in phloem-mediated long-distance signaling. The protein is GDSL esterase/lipase At1g29660 of Arabidopsis thaliana (Mouse-ear cress).